The chain runs to 450 residues: Saccharopine dehydrogenase [NADP(+), L-glutamate-forming] (450 aa).

NADP(+) is bound by residues 11-14 (SGFV), 33-35 (CRT), 55-56 (DV), isoleucine 76, 98-99 (TS), 125-127 (LDP), and serine 175. L-saccharopine contacts are provided by residues 99–100 (SY) and aspartate 126. Residues arginine 224 and 245 to 247 (TLR) each bind L-saccharopine.

This sequence belongs to the saccharopine dehydrogenase family. As to quaternary structure, homodimer.

It catalyses the reaction L-saccharopine + NADP(+) + H2O = (S)-2-amino-6-oxohexanoate + L-glutamate + NADPH + H(+). The protein operates within amino-acid biosynthesis; L-lysine biosynthesis via AAA pathway; L-lysine from L-alpha-aminoadipate (fungal route): step 2/3. In Pyricularia oryzae (strain 70-15 / ATCC MYA-4617 / FGSC 8958) (Rice blast fungus), this protein is Saccharopine dehydrogenase [NADP(+), L-glutamate-forming] (LYS3).